A 208-amino-acid polypeptide reads, in one-letter code: Bacitracin transport permease protein BCRB (208 aa).

Helical transmembrane passes span 23–43 (LYIV…YLFN), 70–90 (VLLL…TLLF), 111–131 (FMIG…VTLL), 135–155 (YVPT…VYGT), 159–179 (ALFP…PEYP), and 182–202 (YSFI…IVYF).

It is found in the cell membrane. In terms of biological role, part of the binding-protein-dependent transport system for bacitracin that confer resistance to this antibiotic; probably responsible for the translocation of the substrate across the membrane. The protein is Bacitracin transport permease protein BCRB (bcrB) of Bacillus licheniformis.